The following is a 412-amino-acid chain: MNLKQELIERFTRYVKIDTQSNEDSHTVPTTPGQIEFGKLLVEELKEIGLTEVTMDDNGYVMATLPANTDKDVPVIGFLAHLDTATDFTGKNVKPQIHENFDGNAITLNEELNVVLTPEQFPELPSYKGHTIITTDGTTLLGADDKAGLTEIMVAMNYLIHNPQIKHGKIRVAFTPDEEIGRGPAHFDVEAFGASFAYTMDGGPLGGLEYESFNAAGAKLTFNGTNTHPGTAKNKMRNATKLAMEFNSYLPVEEAPEYTEGYEGFYHLLSLNGDVEQSKAYYIIRDFDRENFEVRKHNVENIVKQMQEKYGQDAVVLEMNDQYYNMLEKIEPVREIVDIAYEAMKSLNIEPNIHPIRGGTDGSQLSYMGLPTPNIFTGGENYHGKFEYVSVDVMEKAVQVIIEIARRFEEQA.

Zn(2+) is bound at residue H81. Residue D83 is part of the active site. D144 provides a ligand contact to Zn(2+). E178 (proton acceptor) is an active-site residue. 3 residues coordinate Zn(2+): E179, D201, and H383.

This sequence belongs to the peptidase M20B family. The cofactor is Zn(2+).

It is found in the cytoplasm. It catalyses the reaction Release of the N-terminal residue from a tripeptide.. Its function is as follows. Cleaves the N-terminal amino acid of tripeptides. The chain is Peptidase T from Bacillus cereus (strain ZK / E33L).